Consider the following 305-residue polypeptide: Probable cell division protein WhiA (305 aa).

Positions 269–302 (TIKELGELLEPSLGKSGVNHRLRKLVEQANELRK) form a DNA-binding region, H-T-H motif.

This sequence belongs to the WhiA family.

Its function is as follows. Involved in cell division and chromosome segregation. This is Probable cell division protein WhiA from Lactococcus lactis subsp. lactis (strain IL1403) (Streptococcus lactis).